The primary structure comprises 350 residues: ALA-interacting subunit 5 (350 aa).

The segment at 1-23 is disordered; that stretch reads MSSTAASSTVGGGGSSEISGVKK. Ser-2 carries the post-translational modification N-acetylserine. The helical transmembrane segment at 50 to 70 threads the bilayer; it reads VILTFLVAGVVFIPLGVICLF. 2 N-linked (GlcNAc...) asparagine glycosylation sites follow: Asn-181 and Asn-231. A helical transmembrane segment spans residues 304–324; it reads FLGIAYLTVGSICLFLAVTFA.

It belongs to the CDC50/LEM3 family. In terms of assembly, interacts with ALA2 and ALA3 in a heterologous system. Expressed in roots, leaves, stems, flowers and siliques.

The protein resides in the golgi apparatus membrane. The protein localises to the prevacuolar compartment membrane. It is found in the endoplasmic reticulum membrane. Required for the lipid transport activity of the ALA/ALIS P4-ATPase complex. This chain is ALA-interacting subunit 5 (ALIS5), found in Arabidopsis thaliana (Mouse-ear cress).